We begin with the raw amino-acid sequence, 337 residues long: Tetraacyldisaccharide 4'-kinase (337 aa).

51–58 serves as a coordination point for ATP; it reads HLGGAGKT.

This sequence belongs to the LpxK family.

It carries out the reaction a lipid A disaccharide + ATP = a lipid IVA + ADP + H(+). It participates in glycolipid biosynthesis; lipid IV(A) biosynthesis; lipid IV(A) from (3R)-3-hydroxytetradecanoyl-[acyl-carrier-protein] and UDP-N-acetyl-alpha-D-glucosamine: step 6/6. In terms of biological role, transfers the gamma-phosphate of ATP to the 4'-position of a tetraacyldisaccharide 1-phosphate intermediate (termed DS-1-P) to form tetraacyldisaccharide 1,4'-bis-phosphate (lipid IVA). This chain is Tetraacyldisaccharide 4'-kinase, found in Nitrobacter winogradskyi (strain ATCC 25391 / DSM 10237 / CIP 104748 / NCIMB 11846 / Nb-255).